The following is a 117-amino-acid chain: NADH dehydrogenase [ubiquinone] 1 beta subcomplex subunit 9 (117 aa).

Serine 2 bears the N-acetylserine mark.

The protein belongs to the complex I LYR family. In terms of assembly, complex I is composed of at least 49 different subunits. In terms of tissue distribution, expressed in roots, stems, flowers, rosette leaves, cauline leaves and siliques, with the highest expression in the stems.

The protein resides in the mitochondrion inner membrane. Functionally, accessory subunit of the mitochondrial membrane respiratory chain NADH dehydrogenase (Complex I), that is believed to be not involved in catalysis. Complex I functions in the transfer of electrons from NADH to the respiratory chain. The immediate electron acceptor for the enzyme is believed to be ubiquinone. Is required for correct plant growth and development. This Arabidopsis thaliana (Mouse-ear cress) protein is NADH dehydrogenase [ubiquinone] 1 beta subcomplex subunit 9 (CIB22).